We begin with the raw amino-acid sequence, 145 residues long: UPF0201 protein Saci_1285 (145 aa).

The protein belongs to the UPF0201 family.

The protein is UPF0201 protein Saci_1285 of Sulfolobus acidocaldarius (strain ATCC 33909 / DSM 639 / JCM 8929 / NBRC 15157 / NCIMB 11770).